The sequence spans 638 residues: Zinc finger and BTB domain-containing protein 22 (638 aa).

One can recognise a BTB domain in the interval 57–121 (CDVSIRVQGR…AYTGRLSMAA (65 aa)). 4 disordered regions span residues 171–223 (CASV…STSQ), 229–248 (SAAG…APVV), 335–354 (DDED…GEPE), and 367–451 (EPAD…HGAV). A compositionally biased stretch (polar residues) spans 189–210 (SVRSHTSSRASENQSPSSSNYF). At Ser-203 the chain carries Phosphoserine. Residues 483 to 504 (FLCHCGKAFSHKSMRDRHVNMH) form a C2H2-type 1; atypical zinc finger. 2 C2H2-type zinc fingers span residues 510–532 (FDCP…MKTH) and 538–559 (YECS…HRGH). A disordered region spans residues 564-638 (HRMGVGGVGS…DFSGGGGAAH (75 aa)).

It belongs to the krueppel C2H2-type zinc-finger protein family.

The protein resides in the nucleus. May be involved in transcriptional regulation. This is Zinc finger and BTB domain-containing protein 22 (Zbtb22) from Mus musculus (Mouse).